The chain runs to 409 residues: Broad specificity amino-acid racemase (409 aa).

The N-terminal stretch at 1–23 (MPFSRTLLALSLGMALLQNPAFA) is a signal peptide. A disulfide bridge connects residues cysteine 70 and cysteine 96. The active-site Proton acceptor is the lysine 74. Lysine 74 is modified (N6-(pyridoxal phosphate)lysine). Residue arginine 173 participates in substrate binding. Residue tyrosine 300 is the Proton acceptor of the active site. Substrate is bound at residue methionine 348.

It belongs to the alanine racemase family. Bsr subfamily. Homodimer. Requires pyridoxal 5'-phosphate as cofactor.

It localises to the periplasm. It catalyses the reaction an L-alpha-amino acid = a D-alpha-amino acid. It carries out the reaction L-lysine = D-lysine. The enzyme catalyses L-arginine = D-arginine. The catalysed reaction is L-ornithine = D-ornithine. It catalyses the reaction L-alanine = D-alanine. It carries out the reaction L-methionine = D-methionine. In terms of biological role, amino-acid racemase able to utilize a broad range of substrates. Is mostly active with lysine and arginine and, to a lesser extent, with ornithine, whereas is about 10 times less active with alanine, methionine and ethionine. With phenylalanine as substrate only a trace activity is detectable, and is inactive with glutamate. Plays a key role in the catabolism of D-arginine and D-lysine, that allows P.taetrolens strain NBRC 3460 to grow on these basic D-amino acids as a sole carbon source. This is Broad specificity amino-acid racemase from Pseudomonas taetrolens.